The sequence spans 213 residues: Orotate phosphoribosyltransferase (213 aa).

Lys26 serves as a coordination point for 5-phospho-alpha-D-ribose 1-diphosphate. Residue 34 to 35 (FF) coordinates orotate. 5-phospho-alpha-D-ribose 1-diphosphate is bound by residues 72–73 (YK), Arg99, Lys100, Lys103, His105, and 124–132 (DDVITAGTA). Orotate is bound by residues Thr128 and Arg156.

Belongs to the purine/pyrimidine phosphoribosyltransferase family. PyrE subfamily. Homodimer. Requires Mg(2+) as cofactor.

It catalyses the reaction orotidine 5'-phosphate + diphosphate = orotate + 5-phospho-alpha-D-ribose 1-diphosphate. It participates in pyrimidine metabolism; UMP biosynthesis via de novo pathway; UMP from orotate: step 1/2. Its function is as follows. Catalyzes the transfer of a ribosyl phosphate group from 5-phosphoribose 1-diphosphate to orotate, leading to the formation of orotidine monophosphate (OMP). This is Orotate phosphoribosyltransferase from Pseudomonas paraeruginosa (strain DSM 24068 / PA7) (Pseudomonas aeruginosa (strain PA7)).